We begin with the raw amino-acid sequence, 218 residues long: Probable transaldolase (218 aa).

Lys84 acts as the Schiff-base intermediate with substrate in catalysis.

The protein belongs to the transaldolase family. Type 3B subfamily.

The protein localises to the cytoplasm. It catalyses the reaction D-sedoheptulose 7-phosphate + D-glyceraldehyde 3-phosphate = D-erythrose 4-phosphate + beta-D-fructose 6-phosphate. It participates in carbohydrate degradation; pentose phosphate pathway; D-glyceraldehyde 3-phosphate and beta-D-fructose 6-phosphate from D-ribose 5-phosphate and D-xylulose 5-phosphate (non-oxidative stage): step 2/3. Functionally, transaldolase is important for the balance of metabolites in the pentose-phosphate pathway. The chain is Probable transaldolase from Sulfurihydrogenibium sp. (strain YO3AOP1).